The chain runs to 466 residues: Glutamate--tRNA ligase 1 (466 aa).

The 'HIGH' region motif lies at 10-20 (PSPTGLIHLGN). Cys103, Cys105, Cys130, and His132 together coordinate Zn(2+). The 'KMSKS' region signature appears at 247–251 (PLSKR). Lys250 is a binding site for ATP.

The protein belongs to the class-I aminoacyl-tRNA synthetase family. Glutamate--tRNA ligase type 1 subfamily. As to quaternary structure, monomer. The cofactor is Zn(2+).

It is found in the cytoplasm. It catalyses the reaction tRNA(Glu) + L-glutamate + ATP = L-glutamyl-tRNA(Glu) + AMP + diphosphate. Its function is as follows. Catalyzes the attachment of glutamate to tRNA(Glu) in a two-step reaction: glutamate is first activated by ATP to form Glu-AMP and then transferred to the acceptor end of tRNA(Glu). The protein is Glutamate--tRNA ligase 1 of Methylococcus capsulatus (strain ATCC 33009 / NCIMB 11132 / Bath).